The following is a 318-amino-acid chain: Isoflavone reductase (318 aa).

Residues 11 to 17, Arg-36, and Lys-44 contribute to the NADP(+) site; that span reads GPTGAIG. Residue Lys-144 is the Proton acceptor of the active site. Arg-148 contributes to the NADP(+) binding site.

It belongs to the NmrA-type oxidoreductase family. Isoflavone reductase subfamily.

It catalyses the reaction (3R)-vestitone + NADP(+) = 2'-hydroxyformononetin + NADPH + 2 H(+). The protein operates within phytoalexin biosynthesis; pterocarpan phytoalexin biosynthesis. In terms of biological role, reduces achiral isoflavones to chiral isoflavanones during the biosynthesis of chiral pterocarpan phytoalexins. The reduction product is a third isomer, which represents the penultimate intermediate in the synthesis of the phytoalexin (-)-medicarpin, the major phytoalexin in Alfalfa. This is Isoflavone reductase from Medicago sativa (Alfalfa).